Here is a 704-residue protein sequence, read N- to C-terminus: Protein NBR1 homolog (704 aa).

Methionine 1 is modified (N-acetylmethionine). Positions 7–92 (ALVVKVSYGG…KFLKINVNAG (86 aa)) constitute a PB1 domain. Polar residues-rich tracts occupy residues 95–108 (TNSAAPESSGSSTP), 171–189 (PQESSPCSPVTKPGSSGAS), and 223–233 (HSKTSGHVPNS). Disordered regions lie at residues 95–114 (TNSAAPESSGSSTPAGMPNP) and 171–233 (PQES…VPNS). The ZZ-type; degenerate zinc finger occupies 286–336 (HKGIRCDGCGVLPITGPRFKSKVKEDYDLCTICYSVMGNEGDYTRMDKPVS). Zn(2+) is bound by residues cysteine 291, cysteine 294, cysteine 315, and cysteine 318. The region spanning 657–701 (GVSEWDPILEELQEMGFCDDVTNKRLLKKNNGSIKGVVMDLLTGE) is the UBA domain. The LIR signature appears at 661–664 (WDPI).

Homodimer. Interacts with ATG8A, ATG8B, ATG8C, ATG8D, ATG8F and ATG8I. Binds to ubiquitin.

It is found in the cytoplasm. It localises to the vacuole. Its function is as follows. Autophagic substrate degraded in the vacuole by non-selective autophagy. Requires ATG8 protein expression to be recognized as an autophagic substrate. Acts probably as a receptor for autophagosomal degradation of ubiquitinated proteins. Targets ubiquitinated protein aggregates derived from denatured or damaged non-native proteins generated under stress conditions. Functions additively with the E3 ubiquitin-protein ligase CHIP for autophagosomal degradation of proteotoxic aggregates formed under stress conditions. In Arabidopsis thaliana (Mouse-ear cress), this protein is Protein NBR1 homolog.